A 215-amino-acid polypeptide reads, in one-letter code: LexA repressor (215 aa).

The segment at residues 29-49 is a DNA-binding region (H-T-H motif); that stretch reads VREICSAVGFKSTSTVHSYLQ. Residues Ser138 and Lys175 each act as for autocatalytic cleavage activity in the active site.

The protein belongs to the peptidase S24 family. Homodimer.

The enzyme catalyses Hydrolysis of Ala-|-Gly bond in repressor LexA.. Represses a number of genes involved in the response to DNA damage (SOS response), including recA and lexA. In the presence of single-stranded DNA, RecA interacts with LexA causing an autocatalytic cleavage which disrupts the DNA-binding part of LexA, leading to derepression of the SOS regulon and eventually DNA repair. This Ruminiclostridium cellulolyticum (strain ATCC 35319 / DSM 5812 / JCM 6584 / H10) (Clostridium cellulolyticum) protein is LexA repressor.